A 252-amino-acid polypeptide reads, in one-letter code: Pimeloyl-[acyl-carrier protein] methyl ester esterase (252 aa).

Residues 15-239 (LVMLHGWAMH…FPHCGHAPFL (225 aa)) enclose the AB hydrolase-1 domain. Residues tryptophan 21, 81–82 (SL), and 143–147 (FLTLQ) each bind substrate. Serine 81 serves as the catalytic Nucleophile. Catalysis depends on residues aspartate 207 and histidine 235. Residue histidine 235 coordinates substrate.

The protein belongs to the AB hydrolase superfamily. Carboxylesterase BioH family. As to quaternary structure, monomer.

The protein localises to the cytoplasm. The enzyme catalyses 6-carboxyhexanoyl-[ACP] methyl ester + H2O = 6-carboxyhexanoyl-[ACP] + methanol + H(+). It participates in cofactor biosynthesis; biotin biosynthesis. The physiological role of BioH is to remove the methyl group introduced by BioC when the pimeloyl moiety is complete. It allows to synthesize pimeloyl-ACP via the fatty acid synthetic pathway through the hydrolysis of the ester bonds of pimeloyl-ACP esters. The sequence is that of Pimeloyl-[acyl-carrier protein] methyl ester esterase from Nitrosomonas europaea (strain ATCC 19718 / CIP 103999 / KCTC 2705 / NBRC 14298).